Reading from the N-terminus, the 492-residue chain is Glutamate--tRNA ligase (492 aa).

The short motif at 13–23 is the 'HIGH' region element; that stretch reads PSPTGTPHVGM. The 'KMSKS' region signature appears at 257–261; it reads KLSKR. Residue lysine 260 participates in ATP binding.

It belongs to the class-I aminoacyl-tRNA synthetase family. Glutamate--tRNA ligase type 1 subfamily. In terms of assembly, monomer.

It is found in the cytoplasm. It catalyses the reaction tRNA(Glu) + L-glutamate + ATP = L-glutamyl-tRNA(Glu) + AMP + diphosphate. Functionally, catalyzes the attachment of glutamate to tRNA(Glu) in a two-step reaction: glutamate is first activated by ATP to form Glu-AMP and then transferred to the acceptor end of tRNA(Glu). This is Glutamate--tRNA ligase from Mycolicibacterium paratuberculosis (strain ATCC BAA-968 / K-10) (Mycobacterium paratuberculosis).